A 208-amino-acid chain; its full sequence is MARYSESVCRLCRRENLKMYLKGDRCYTDKCAIERRPYPPGQHGQGRTKFSEYGVQLREKQKVKRMYGLLEAGFRHAYQNAAAAKGKTGENLLQTLELRLDNVVFRLGFADTRNEARQLVRHGHFKVNGRKVNIPSYLCRPGDKVELKDRSKKVVRITEALEAVDRRGVPAWLDLDKGGFKGTVKTSPAREDITMPIQEQLIVELYSK.

One can recognise an S4 RNA-binding domain in the interval 98–159; it reads LRLDNVVFRL…RSKKVVRITE (62 aa).

It belongs to the universal ribosomal protein uS4 family. Part of the 30S ribosomal subunit. Contacts protein S5. The interaction surface between S4 and S5 is involved in control of translational fidelity.

In terms of biological role, one of the primary rRNA binding proteins, it binds directly to 16S rRNA where it nucleates assembly of the body of the 30S subunit. Functionally, with S5 and S12 plays an important role in translational accuracy. This chain is Small ribosomal subunit protein uS4, found in Anaeromyxobacter dehalogenans (strain 2CP-1 / ATCC BAA-258).